The following is a 2238-amino-acid chain: Protein Ycf2 (2238 aa).

Residue 1579–1586 (GSIGTGRS) coordinates ATP.

The protein belongs to the Ycf2 family.

It localises to the plastid. Probable ATPase of unknown function. Its presence in a non-photosynthetic plant (Epifagus virginiana) and experiments in tobacco indicate that it has an essential function which is probably not related to photosynthesis. The polypeptide is Protein Ycf2 (Cuscuta exaltata (Tall dodder)).